A 96-amino-acid chain; its full sequence is Carboxysome shell protein CsoS1A (96 aa).

Residues 7-92 (ALGMIETRGL…PHKEVEPVLT (86 aa)) enclose the BMC domain.

Belongs to the bacterial microcompartments protein family. CsoS1 subfamily. Homohexamer with a small central pore. Forms a CsoS2-CsoS1-RuBisCO complex.

It localises to the carboxysome. In terms of biological role, one of shell proteins of the carboxysome, a polyhedral inclusion where RuBisCO (ribulose bisphosphate carboxylase, ccbL-ccbS) is sequestered. Assembles into hexamers which make sheets that form the facets of the polyhedral carboxysome. The shell probably limits the diffusion of CO(2) into and out of the carboxysome. In Hydrogenovibrio crunogenus (strain DSM 25203 / XCL-2) (Thiomicrospira crunogena), this protein is Carboxysome shell protein CsoS1A.